The sequence spans 441 residues: MKERSTELVQGFRHSVPYINAHRGKTFVIMLGGEAIEHANFSSIVNDIGLLHSLGIKLVVVYGARPQIDANLTTHHYEPHYHKNTRITDSTTLELVKQAAGMLQLDITARLSMSLNNTPLQGAHINVVSGNFIIAQPLGVDDGVDYCHSGRIRRIDEEAVHRQLNSGAIVLLGPVAVSVTGESFNLTSEEVATQLAIKLKAEKMIGFCSSQGVTNEEGSIISELFPDDAQRRIDTLEQAGDYHSGTVRFLRGAVKACRSGVRRSHLISYQDDGALLQELFSRDGIGTQIVMESAEQVRRATINDIGGILELIRPLEEQGILVRRSREQLEMEIDKFTVVVRDNLTIACAALYPFPEESIGEMACVAVHPDYRSSSRGDMLLMRIAAQARQQGLQKLFVLTTHSIHWFQERGFLPAEVEMLPKKKQALYNYQRRSKILVLDL.

An N-acetyltransferase domain is found at 295 to 434; it reads EQVRRATIND…QALYNYQRRS (140 aa).

Belongs to the acetyltransferase family. ArgA subfamily. Homohexamer.

The protein resides in the cytoplasm. The enzyme catalyses L-glutamate + acetyl-CoA = N-acetyl-L-glutamate + CoA + H(+). It functions in the pathway amino-acid biosynthesis; L-arginine biosynthesis; N(2)-acetyl-L-ornithine from L-glutamate: step 1/4. In Pectobacterium carotovorum subsp. carotovorum (strain PC1), this protein is Amino-acid acetyltransferase.